The primary structure comprises 194 residues: 23 kDa U4/U6.U5 small nuclear ribonucleoprotein component (194 aa).

The C2H2-type zinc-finger motif lies at 80–104 (FYCDICNLTFKDTLQYIDHLNHKVH).

Component of the U4/U6-U5 tri-snRNP complex composed of the U4, U6 and U5 snRNAs and at least PRP3, PRP4, PRP6, PRP8, PRP18, PRP31, PRP38, SNU13, SNU23, SNU66, SNU114, SPP381, SMB1, SMD1, SMD2, SMD3, SMX2, SMX3, LSM2, LSM3, LSM4, LSM5, LSM6, LSM7, LSM8, BRR2 and DIB1.

Its subcellular location is the nucleus. In terms of biological role, participates in pre-mRNA splicing. Part of the U4/U5/U6 tri-snRNP complex, one of the building blocks of the spliceosome. The sequence is that of 23 kDa U4/U6.U5 small nuclear ribonucleoprotein component (SNU23) from Saccharomyces cerevisiae (strain ATCC 204508 / S288c) (Baker's yeast).